A 350-amino-acid chain; its full sequence is Phenylalanine--tRNA ligase alpha subunit (350 aa).

Glu271 provides a ligand contact to Mg(2+).

It belongs to the class-II aminoacyl-tRNA synthetase family. Phe-tRNA synthetase alpha subunit type 1 subfamily. As to quaternary structure, tetramer of two alpha and two beta subunits. The cofactor is Mg(2+).

Its subcellular location is the cytoplasm. It catalyses the reaction tRNA(Phe) + L-phenylalanine + ATP = L-phenylalanyl-tRNA(Phe) + AMP + diphosphate + H(+). This chain is Phenylalanine--tRNA ligase alpha subunit, found in Paracidovorax citrulli (strain AAC00-1) (Acidovorax citrulli).